Consider the following 639-residue polypeptide: tRNA (uracil(54)-C(5))-methyltransferase (639 aa).

Residues 78-113 are disordered; that stretch reads VPPTMKHTVDNKRLSSPLTDSGNRRTKKPKLRKYKA. Serine 92 and serine 93 each carry phosphoserine. The span at 101–113 shows a compositional bias: basic residues; the sequence is RRTKKPKLRKYKA. The region spanning 163-228 is the TRAM domain; that stretch reads LQYHREVKNV…PYYVESDLLD (66 aa). S-adenosyl-L-methionine contacts are provided by glutamine 461, tyrosine 496, glutamate 517, and aspartate 564. Cysteine 591 acts as the Nucleophile in catalysis. The active-site Proton acceptor is the glutamate 631.

Belongs to the class I-like SAM-binding methyltransferase superfamily. RNA M5U methyltransferase family.

The catalysed reaction is uridine(54) in tRNA + S-adenosyl-L-methionine = 5-methyluridine(54) in tRNA + S-adenosyl-L-homocysteine + H(+). In terms of biological role, catalyzes the formation of 5-methyl-uridine at position 54 (m5U54) in all tRNA. May also have a role in tRNA stabilization or maturation. This is tRNA (uracil(54)-C(5))-methyltransferase (TRM2) from Saccharomyces cerevisiae (strain ATCC 204508 / S288c) (Baker's yeast).